Reading from the N-terminus, the 470-residue chain is Ubiquitin carboxyl-terminal hydrolase calypso (470 aa).

Residues 11–241 form the UCH catalytic domain; that stretch reads GWLELESDPG…ITHKLKMLRT (231 aa). The active-site Nucleophile is C98. H177 serves as the catalytic Proton donor. Residues 260–280 are a coiled coil; sequence ESRSQAEIRETVDKIKKEEQE. Residues 392 to 420 form the ULD domain; the sequence is NYDEFICTFLSMLAYQGELGDLVTQHLVT. A positively charged C-terminal tail required for binding nucleosomes region spans residues 422–470; it reads RKPSLGGVQNSGSRGVVRNYNKKSTTNGSSPKTPSSKRRRGRTKYRKRK. Residues 423–434 show a composition bias toward polar residues; that stretch reads KPSLGGVQNSGS. The interval 423-470 is disordered; sequence KPSLGGVQNSGSRGVVRNYNKKSTTNGSSPKTPSSKRRRGRTKYRKRK. A compositionally biased stretch (basic residues) spans 456-470; that stretch reads SSKRRRGRTKYRKRK.

It belongs to the peptidase C12 family. BAP1 subfamily. As to quaternary structure, catalytic component of the polycomb repressive deubiquitinase (PR-DUB) complex, at least composed of caly/calypso, Asx and sba (MBD5/6 homolog). The PR-DUB complex associates with nucleosomes to mediate deubiquitination of histone H2AK118ub1 substrates; the association requires the positively charged C-terminal tail of caly, probably due to direct binding of DNA. Interacts (via ULD domain) with Asx (via DEUBAD domain); the interaction produces a stable heterodimer with a composite binding site for ubiquitin. Homodimerizes (via coiled-coil hinge-region between the UCH and ULD domains) to mediate assembly of 2 copies of the caly-Asx heterodimer into a bisymmetric tetramer; dimerization enhances PR-DUB association with nucleosomes.

It is found in the nucleus. The enzyme catalyses Thiol-dependent hydrolysis of ester, thioester, amide, peptide and isopeptide bonds formed by the C-terminal Gly of ubiquitin (a 76-residue protein attached to proteins as an intracellular targeting signal).. In terms of biological role, catalytic component of the polycomb repressive deubiquitinase (PR-DUB) complex, a complex that specifically mediates deubiquitination of histone H2A monoubiquitinated at 'Lys-119' (H2AK118ub1). Mediates bisymmetric organization of the PR-DUB complex and is involved in association with nucleosomes to mediate deubiquitination. Does not deubiquitinate monoubiquitinated histone H2B. Required to maintain the transcriptionally repressive state of homeotic genes throughout development. The PR-DUB complex has weak or no activity toward 'Lys-48'- and 'Lys-63'-linked polyubiquitin chains. Polycomb group (PcG) protein. In Culex quinquefasciatus (Southern house mosquito), this protein is Ubiquitin carboxyl-terminal hydrolase calypso.